The primary structure comprises 312 residues: 4-hydroxy-3-methylbut-2-enyl diphosphate reductase (312 aa).

C15 serves as a coordination point for [4Fe-4S] cluster. Residues H44 and H77 each coordinate (2E)-4-hydroxy-3-methylbut-2-enyl diphosphate. Residues H44 and H77 each contribute to the dimethylallyl diphosphate site. Isopentenyl diphosphate contacts are provided by H44 and H77. C99 is a binding site for [4Fe-4S] cluster. H127 provides a ligand contact to (2E)-4-hydroxy-3-methylbut-2-enyl diphosphate. A dimethylallyl diphosphate-binding site is contributed by H127. H127 is a binding site for isopentenyl diphosphate. Catalysis depends on E129, which acts as the Proton donor. (2E)-4-hydroxy-3-methylbut-2-enyl diphosphate is bound at residue T167. C197 is a binding site for [4Fe-4S] cluster. (2E)-4-hydroxy-3-methylbut-2-enyl diphosphate contacts are provided by S225, S226, N227, and S269. Positions 225, 226, 227, and 269 each coordinate dimethylallyl diphosphate. Residues S225, S226, N227, and S269 each contribute to the isopentenyl diphosphate site.

The protein belongs to the IspH family. [4Fe-4S] cluster serves as cofactor.

It catalyses the reaction isopentenyl diphosphate + 2 oxidized [2Fe-2S]-[ferredoxin] + H2O = (2E)-4-hydroxy-3-methylbut-2-enyl diphosphate + 2 reduced [2Fe-2S]-[ferredoxin] + 2 H(+). The catalysed reaction is dimethylallyl diphosphate + 2 oxidized [2Fe-2S]-[ferredoxin] + H2O = (2E)-4-hydroxy-3-methylbut-2-enyl diphosphate + 2 reduced [2Fe-2S]-[ferredoxin] + 2 H(+). It functions in the pathway isoprenoid biosynthesis; dimethylallyl diphosphate biosynthesis; dimethylallyl diphosphate from (2E)-4-hydroxy-3-methylbutenyl diphosphate: step 1/1. The protein operates within isoprenoid biosynthesis; isopentenyl diphosphate biosynthesis via DXP pathway; isopentenyl diphosphate from 1-deoxy-D-xylulose 5-phosphate: step 6/6. Catalyzes the conversion of 1-hydroxy-2-methyl-2-(E)-butenyl 4-diphosphate (HMBPP) into a mixture of isopentenyl diphosphate (IPP) and dimethylallyl diphosphate (DMAPP). Acts in the terminal step of the DOXP/MEP pathway for isoprenoid precursor biosynthesis. The chain is 4-hydroxy-3-methylbut-2-enyl diphosphate reductase from Azoarcus sp. (strain BH72).